The sequence spans 186 residues: Ribosome-recycling factor (186 aa).

It belongs to the RRF family.

It is found in the cytoplasm. In terms of biological role, responsible for the release of ribosomes from messenger RNA at the termination of protein biosynthesis. May increase the efficiency of translation by recycling ribosomes from one round of translation to another. In Rickettsia peacockii (strain Rustic), this protein is Ribosome-recycling factor.